The primary structure comprises 2313 residues: Cell surface glycoprotein 1 (2313 aa).

Positions 1 to 28 are cleaved as a signal peptide; that stretch reads MKRKNKVLSILLTLLLIISTTSVNMSFA. 2 Cohesin domains span residues 34-197 and 205-367; these read IEMV…VVEA and VALE…EIVV. The segment covering 369-378 has biased composition (acidic residues); the sequence is GEEPGEEPTE. The segment at 369–400 is disordered; it reads GEEPGEEPTEEPVPTETSVDPTPTVTEEPVPS. Over residues 380 to 400 the composition is skewed to low complexity; it reads PVPTETSVDPTPTVTEEPVPS. Residues 407 to 569 form the Cohesin 3 domain; that stretch reads VIMELDKTKV…SVVQPGEIVV (163 aa). The segment covering 571-580 has biased composition (acidic residues); that stretch reads GEEPGEEPTE. The disordered stretch occupies residues 571-602; it reads GEEPGEEPTEEPVPTETSVDPTPTVTEEPVPS. Residues 582 to 602 show a composition bias toward low complexity; it reads PVPTETSVDPTPTVTEEPVPS. Residues 609–771 form the Cohesin 4 domain; the sequence is VIMELDKTKV…SVVQPGEIVA (163 aa). The segment covering 772-782 has biased composition (acidic residues); it reads EGEEPGEEPTE. The interval 772–805 is disordered; the sequence is EGEEPGEEPTEEPVPTETSADPTPTVTEEPVPSE. The span at 784–803 shows a compositional bias: low complexity; the sequence is PVPTETSADPTPTVTEEPVP. Residues 811–973 enclose the Cohesin 5 domain; it reads VIMELDKTKV…SVVQPGEIVA (163 aa). Over residues 974-984 the composition is skewed to acidic residues; the sequence is EGEEPGEEPTE. The disordered stretch occupies residues 974 to 1007; that stretch reads EGEEPGEEPTEEPVPTETPVDPTPTVTEEPVPSE. The span at 986 to 1007 shows a compositional bias: low complexity; that stretch reads PVPTETPVDPTPTVTEEPVPSE. The Cohesin 6 domain occupies 1013 to 1175; sequence VIMELDKTKV…SVVQPGEIVA (163 aa). Disordered stretches follow at residues 1177 to 1203 and 1374 to 2111; these read GEEPTEEPVPTETPVDPTPTVTEEPVP and ASDE…PDGS. A compositionally biased stretch (low complexity) spans 1184-1203; that stretch reads PVPTETPVDPTPTVTEEPVP. In terms of domain architecture, Cohesin 7 spans 1211-1375; the sequence is VIMELDKTKV…IQPAPIKAAS (165 aa). Positions 1376-1390 are enriched in low complexity; it reads DEPIPTDTPSDEPTP. The tract at residues 1383–2025 is approximate tandem repeats of T-P-S-D-E-P; sequence TPSDEPTPSD…SDEPTPSETP (643 aa). Pro residues predominate over residues 1391–1411; sequence SDEPTPSDEPTPSDEPTPSDE. The span at 1423-1433 shows a compositional bias: low complexity; it reads PTDTPSDEPTP. Pro residues predominate over residues 1434–1454; sequence SDEPTPSDEPTPSDEPTPSDE. Residues 1466-1476 are compositionally biased toward low complexity; the sequence is PTDTPSDEPTP. Positions 1477-1497 are enriched in pro residues; it reads SDEPTPSDEPTPSDEPTPSDE. The segment covering 1509–1519 has biased composition (low complexity); it reads PTDTPSDEPTP. Over residues 1520-1540 the composition is skewed to pro residues; that stretch reads SDEPTPSDEPTPSDEPTPSDE. Residues 1552-1562 show a composition bias toward low complexity; that stretch reads PTDTPSDEPTP. Over residues 1563 to 1595 the composition is skewed to pro residues; that stretch reads SDEPTPSDEPTPSDEPTPSDEPTPSDEPTPSDE. Low complexity predominate over residues 1607–1617; it reads PTDTPSDEPTP. Positions 1618 to 1650 are enriched in pro residues; sequence SDEPTPSDEPTPSDEPTPSDEPTPSDEPTPSDE. Residues 1662–1672 show a composition bias toward low complexity; that stretch reads PTDTPSDEPTP. Residues 1673 to 1693 show a composition bias toward pro residues; that stretch reads SDEPTPSDEPTPSDEPTPSDE. Residues 1705–1715 show a composition bias toward low complexity; sequence PTDTPSDEPTP. The segment covering 1716 to 1736 has biased composition (pro residues); that stretch reads SDEPTPSDEPTPSDEPTPSDE. Low complexity predominate over residues 1748-1758; it reads PTDTPSDEPTP. Residues 1759-1779 are compositionally biased toward pro residues; sequence SDEPTPSDEPTPSDEPTPSDE. Positions 1791–1801 are enriched in low complexity; that stretch reads PTDTPSDEPTP. The segment covering 1802-1822 has biased composition (pro residues); it reads SDEPTPSDEPTPSDEPTPSDE. Over residues 1834–1844 the composition is skewed to low complexity; the sequence is PTDTPSDEPTP. Positions 1845 to 1865 are enriched in pro residues; it reads SDEPTPSDEPTPSDEPTPSDE. Residues 1877 to 1887 show a composition bias toward low complexity; the sequence is PTDTPSDEPTP. The span at 1888–1908 shows a compositional bias: pro residues; it reads SDEPTPSDEPTPSDEPTPSDE. Positions 1920–1930 are enriched in low complexity; that stretch reads PTDTPSDEPTP. Positions 1931–1963 are enriched in pro residues; it reads SDEPTPSDEPTPSDEPTPSDEPTPSDEPTPSDE. Residues 1975 to 1985 show a composition bias toward low complexity; it reads PTDTPSDEPTP. 2 stretches are compositionally biased toward pro residues: residues 1986–2018 and 2027–2039; these read SDEPTPSDEPTPSDEPTPSDEPTPSDEPTPSDE and EPTPTTTPTPTPS. Over residues 2045-2062 the composition is skewed to gly residues; it reads GSGGSGGSGGGGGGGGGT. SLH domains follow at residues 2067–2140, 2141–2204, and 2211–2274; these read PTPT…YGAQ, SASP…EIMS, and ISNP…GAPK. A compositionally biased stretch (low complexity) spans 2073–2082; the sequence is SKPTSTPAPT.

As to quaternary structure, assembled into mono-layered crystalline arrays.

The protein localises to the secreted. The protein resides in the cell wall. Its subcellular location is the S-layer. The chain is Cell surface glycoprotein 1 (olpB) from Acetivibrio thermocellus (strain ATCC 27405 / DSM 1237 / JCM 9322 / NBRC 103400 / NCIMB 10682 / NRRL B-4536 / VPI 7372) (Clostridium thermocellum).